Here is a 392-residue protein sequence, read N- to C-terminus: Large ribosomal subunit protein uL3 (392 aa).

Belongs to the universal ribosomal protein uL3 family. As to quaternary structure, component of the large ribosomal subunit (LSU). Mature N.crassa ribosomes consist of a small (40S) and a large (60S) subunit. The 40S small subunit contains 1 molecule of ribosomal RNA (18S rRNA) and at least 32 different proteins. The large 60S subunit contains 3 rRNA molecules (26S, 5.8S and 5S rRNA) and at least 42 different proteins.

Its subcellular location is the cytoplasm. Functionally, component of the ribosome, a large ribonucleoprotein complex responsible for the synthesis of proteins in the cell. The small ribosomal subunit (SSU) binds messenger RNAs (mRNAs) and translates the encoded message by selecting cognate aminoacyl-transfer RNA (tRNA) molecules. The large subunit (LSU) contains the ribosomal catalytic site termed the peptidyl transferase center (PTC), which catalyzes the formation of peptide bonds, thereby polymerizing the amino acids delivered by tRNAs into a polypeptide chain. The nascent polypeptides leave the ribosome through a tunnel in the LSU and interact with protein factors that function in enzymatic processing, targeting, and the membrane insertion of nascent chains at the exit of the ribosomal tunnel. This Neurospora crassa (strain ATCC 24698 / 74-OR23-1A / CBS 708.71 / DSM 1257 / FGSC 987) protein is Large ribosomal subunit protein uL3 (rpl-3).